Reading from the N-terminus, the 155-residue chain is Small ribosomal subunit protein uS7c (155 aa).

This sequence belongs to the universal ribosomal protein uS7 family. In terms of assembly, part of the 30S ribosomal subunit.

It localises to the plastid. Its subcellular location is the chloroplast. One of the primary rRNA binding proteins, it binds directly to 16S rRNA where it nucleates assembly of the head domain of the 30S subunit. In Allium textile (Textile onion), this protein is Small ribosomal subunit protein uS7c (rps7).